The sequence spans 445 residues: Xylose isomerase (445 aa).

Residues His107 and Asp110 contribute to the active site. 7 residues coordinate Mg(2+): Glu238, Glu274, His277, Asp302, Asp313, Asp315, and Asp345.

The protein belongs to the xylose isomerase family. As to quaternary structure, homotetramer. Requires Mg(2+) as cofactor.

The protein resides in the cytoplasm. It catalyses the reaction alpha-D-xylose = alpha-D-xylulofuranose. In Bacillus subtilis (strain 168), this protein is Xylose isomerase (xylA).